Reading from the N-terminus, the 428-residue chain is ATP-dependent RNA helicase RhlB (428 aa).

A Q motif motif is present at residues 9-37 (KKFSDFALHPKVIEALDNKGFSNCTPIQA). Positions 40 to 219 (LPFTVEGRDV…FEQMNHAEYI (180 aa)) constitute a Helicase ATP-binding domain. ATP is bound at residue 53-60 (AQTGTGKT). The DEAD box motif lies at 165–168 (DEAD). The Helicase C-terminal domain maps to 245-390 (RLLQTLLEEE…VSKYNSQALL (146 aa)). A disordered region spans residues 392–428 (DLPAPKRRYRSRSGNHQRRNNLSHRNNTPRNNRKRSG). The span at 396 to 413 (PKRRYRSRSGNHQRRNNL) shows a compositional bias: basic residues.

The protein belongs to the DEAD box helicase family. RhlB subfamily. In terms of assembly, component of the RNA degradosome, which is a multiprotein complex involved in RNA processing and mRNA degradation.

Its subcellular location is the cytoplasm. It carries out the reaction ATP + H2O = ADP + phosphate + H(+). DEAD-box RNA helicase involved in RNA degradation. Has RNA-dependent ATPase activity and unwinds double-stranded RNA. The protein is ATP-dependent RNA helicase RhlB of Photorhabdus laumondii subsp. laumondii (strain DSM 15139 / CIP 105565 / TT01) (Photorhabdus luminescens subsp. laumondii).